A 437-amino-acid chain; its full sequence is GTPase HflX (437 aa).

The segment at 150-173 (DRQGGGSGGGKGGGGAARGEGEKQ) is disordered. A compositionally biased stretch (gly residues) spans 152–167 (QGGGSGGGKGGGGAAR). In terms of domain architecture, Hflx-type G spans 212–382 (ATAAIVGYTN…ACVEMLESRV (171 aa)). GTP-binding positions include 218–225 (GYTNAGKS), 243–247 (FATLD), 265–268 (DTVG), 331–334 (NKVD), and 360–362 (SVK). The Mg(2+) site is built by Ser-225 and Thr-245.

It belongs to the TRAFAC class OBG-HflX-like GTPase superfamily. HflX GTPase family. Monomer. Associates with the 50S ribosomal subunit. It depends on Mg(2+) as a cofactor.

The protein resides in the cytoplasm. Its function is as follows. GTPase that associates with the 50S ribosomal subunit and may have a role during protein synthesis or ribosome biogenesis. This chain is GTPase HflX, found in Akkermansia muciniphila (strain ATCC BAA-835 / DSM 22959 / JCM 33894 / BCRC 81048 / CCUG 64013 / CIP 107961 / Muc).